A 434-amino-acid chain; its full sequence is UPF0597 protein CLK_1462 (434 aa).

It belongs to the UPF0597 family.

In Clostridium botulinum (strain Loch Maree / Type A3), this protein is UPF0597 protein CLK_1462.